The following is a 396-amino-acid chain: ATP phosphoribosyltransferase regulatory subunit (396 aa).

It belongs to the class-II aminoacyl-tRNA synthetase family. HisZ subfamily. In terms of assembly, heteromultimer composed of HisG and HisZ subunits.

The protein localises to the cytoplasm. Its pathway is amino-acid biosynthesis; L-histidine biosynthesis; L-histidine from 5-phospho-alpha-D-ribose 1-diphosphate: step 1/9. In terms of biological role, required for the first step of histidine biosynthesis. May allow the feedback regulation of ATP phosphoribosyltransferase activity by histidine. The chain is ATP phosphoribosyltransferase regulatory subunit from Alkaliphilus metalliredigens (strain QYMF).